Consider the following 340-residue polypeptide: CMP-sialic acid transporter 1 (340 aa).

The Cytoplasmic segment spans residues 1-5 (MAATP). A helical transmembrane segment spans residues 6-26 (WYFVAVLLTILTSSQGILTTL). Residues 27 to 36 (SQSDGGYKYD) lie on the Lumenal side of the membrane. The helical transmembrane segment at 37-57 (YATVPFLAEVFKLIISGLFLW) threads the bilayer. The Cytoplasmic segment spans residues 58 to 78 (REMRTSSSTTSRITTDWKSVR). A helical membrane pass occupies residues 79-99 (LFVIPSLIYLIHNNVQFATLT). The Lumenal segment spans residues 100 to 102 (YVD). The helical transmembrane segment at 103 to 125 (TSTYQIMGNLKIVTTGILFRLFL) threads the bilayer. The Cytoplasmic segment spans residues 126 to 168 (KRKLSKLQWMAIGLLAVGTTTSQVKGCGEASCDSLFTAPIQGY). Residues 169–189 (LLGILSAGLSALAGIYTEFLM) form a helical membrane-spanning segment. Residues 190-200 (KRNNDTLYWQN) lie on the Lumenal side of the membrane. Residues 201-217 (LQLYTFGSLFNVARLIA) traverse the membrane as a helical segment. Over 218 to 238 (DDFRHGFEKGPWWQRIFDGYS) the chain is Cytoplasmic. Residues 239–259 (ITTWLVVLNLGSTGLLVSWLM) form a helical membrane-spanning segment. Topologically, residues 260–282 (KYADNIVKVYSTSMAMLLTMVAS) are lumenal. A helical membrane pass occupies residues 283-303 (IYLFSFKPTLQLFLGIVICIM). Topologically, residues 304–340 (SLHMYFAPPHTLVDLPVTNEAHAKTLKQVVVEEKTDS) are cytoplasmic.

The protein belongs to the nucleotide-sugar transporter family. CMP-Sialate:CMP antiporter (TC 2.A.7.12) subfamily.

The protein resides in the golgi apparatus membrane. In terms of biological role, essential protein. Sugar transporter involved in the transport of CMP-sialic acid from the cytoplasm into the Golgi. This Arabidopsis thaliana (Mouse-ear cress) protein is CMP-sialic acid transporter 1.